The chain runs to 236 residues: UPF0502 protein BceJ2315_62050 (236 aa).

It belongs to the UPF0502 family.

The sequence is that of UPF0502 protein BceJ2315_62050 from Burkholderia cenocepacia (strain ATCC BAA-245 / DSM 16553 / LMG 16656 / NCTC 13227 / J2315 / CF5610) (Burkholderia cepacia (strain J2315)).